Here is a 244-residue protein sequence, read N- to C-terminus: Transcriptional regulatory protein YpdB (244 aa).

The region spanning 2–116 (KVIIVEDEFL…RITGMLQKLE (115 aa)) is the Response regulatory domain. Asp53 carries the post-translational modification 4-aspartylphosphate. One can recognise an HTH LytTR-type domain in the interval 139–244 (INLVKDERII…VKEFRQLMHL (106 aa)).

Phosphorylated by YpdA.

The protein resides in the cytoplasm. Functionally, member of the two-component regulatory system YpdA/YpdB. YpdB regulates expression of yhjX by binding to its promoter region. This chain is Transcriptional regulatory protein YpdB (ypdB), found in Escherichia coli O157:H7.